The sequence spans 858 residues: MSTTRPLLGMKRITEVTCTEPPGGRQSPTASRAQPDSLTVDEFTVHEDKQTELKCSKPKVEQVFQVTFTIIGLLDHTGAHGSKASRQIWLQLKGKKEDVYKAKEYVKGLCDPELQKEEWYPVDMHCIFAGARGLFLDRLLRDTSAEVQVLEPGRLKLSGCAEAVVMAQSRVQQFVALFQEKRSLPADREPSVKRKFKTFVEDRADKYAMELLLLPSALKEELLGLAQSPTQPIVIIDLEQDRSQTSTPVTDLSNRILDTTFEDKTSPITPEVMPGLNGRPCNKRRSSESEQRDTKRQYSLERREEEQCEEREREPTKTWTVKSAKGTLAASEMTNESEAVSPETNLRCLVNFFRTMGYQQDVVERVVRETGQTEDTFLLLERIVEETQKTQSTQGAQRTSRTPDPSPCANASSTSTSNRLKEKERVQMRALAEIKCKENIRPPSTNGIGQKNQTSSVPLASATLKRNNGAQTDLCEVIIIDDEEDFTETERKPRLTPLDLKPESRFDYLPRGSSQTMVPVRMETVTNLRSSSQGPPLRTSDTRPGCSYQTLPGRAPLPRSEAQYTSKAAPLTGMSRFQQSLRTPYRLILQNEPGSPNLRHIIIDGSNVAMAHGLHRVFSCRGIAIAVEAFWRRGHREITVFVPQWRQKKDPNITEQHFLNQLENLRLLSFTPSREVCGHRISSHDDRFLLHLAEKTGGVIVTNDNLRDFVSQSEAWRRIIHERLLQFTFVEDHFMIPDDPLGKHGPHLDEFLLKDSRGSPIIPPLRTDLRATPSVYSQAAQSTAHPSSPSHWPHSGPPDWHLPRPSPSPPPQRSPSETTELKRKLYDIFPDQKQRIDRILSDNPYMRDLNALSGLLLG.

The disordered stretch occupies residues 17 to 37 (TCTEPPGGRQSPTASRAQPDS). Over residues 26-37 (QSPTASRAQPDS) the composition is skewed to polar residues. One can recognise a KH-like domain in the interval 96 to 180 (KEDVYKAKEY…VQQFVALFQE (85 aa)). Disordered regions lie at residues 262–321 (EDKT…TWTV) and 388–424 (QKTQ…KEKE). Residues 285 to 316 (RSSESEQRDTKRQYSLERREEEQCEEREREPT) show a composition bias toward basic and acidic residues. Polar residues predominate over residues 389 to 418 (KTQSTQGAQRTSRTPDPSPCANASSTSTSN). An RNase NYN domain is found at 598-750 (LRHIIIDGSN…LGKHGPHLDE (153 aa)). Positions 774–784 (SVYSQAAQSTA) are enriched in polar residues. Residues 774–823 (SVYSQAAQSTAHPSSPSHWPHSGPPDWHLPRPSPSPPPQRSPSETTELKR) are disordered. The span at 785-799 (HPSSPSHWPHSGPPD) shows a compositional bias: low complexity. The segment covering 804-813 (RPSPSPPPQR) has biased composition (pro residues). The interval 813–858 (RSPSETTELKRKLYDIFPDQKQRIDRILSDNPYMRDLNALSGLLLG) is coCUN.

The protein belongs to the N4BP1 family.

The protein resides in the nucleus. The protein localises to the nucleolus. Its subcellular location is the PML body. Potent suppressor of cytokine production that acts as a regulator of innate immune signaling and inflammation. Acts as a key negative regulator of select cytokine and chemokine responses elicited by TRIF-independent Toll-like receptors (TLRs), thereby limiting inflammatory cytokine responses to minor insults. Has ribonuclease activity. This Danio rerio (Zebrafish) protein is NEDD4-binding protein 1.